Here is a 396-residue protein sequence, read N- to C-terminus: Stearoyl-[acyl-carrier-protein] 9-desaturase 5, chloroplastic (396 aa).

The transit peptide at 1-29 (MAMAMDRIVFSPSSYVYRPCQARGSRSSR) directs the protein to the chloroplast. Residues Glu137, Glu175, His178, Glu228, Glu261, and His264 each contribute to the Fe cation site.

Belongs to the fatty acid desaturase type 2 family. In terms of assembly, homodimer. It depends on Fe(2+) as a cofactor. As to expression, ubiquitously expressed with a preference in leaves, flowers and stems.

Its subcellular location is the plastid. It localises to the chloroplast stroma. It carries out the reaction octadecanoyl-[ACP] + 2 reduced [2Fe-2S]-[ferredoxin] + O2 + 2 H(+) = (9Z)-octadecenoyl-[ACP] + 2 oxidized [2Fe-2S]-[ferredoxin] + 2 H2O. It participates in lipid metabolism; fatty acid metabolism. Its function is as follows. Converts stearoyl-ACP to oleoyl-ACP by introduction of a cis double bond between carbons 9 and 10 of the acyl chain. This chain is Stearoyl-[acyl-carrier-protein] 9-desaturase 5, chloroplastic (S-ACP-DES5), found in Arabidopsis thaliana (Mouse-ear cress).